A 621-amino-acid polypeptide reads, in one-letter code: Chaperone protein HscA homolog (621 aa).

The protein belongs to the heat shock protein 70 family.

Functionally, chaperone involved in the maturation of iron-sulfur cluster-containing proteins. Has a low intrinsic ATPase activity which is markedly stimulated by HscB. The sequence is that of Chaperone protein HscA homolog from Polynucleobacter necessarius subsp. necessarius (strain STIR1).